Consider the following 557-residue polypeptide: CTP synthase (557 aa).

The interval Met-1–Leu-270 is amidoligase domain. Ser-13 contacts CTP. Residue Ser-13 participates in UTP binding. ATP contacts are provided by residues Ser-14–Ile-19 and Asp-71. Mg(2+)-binding residues include Asp-71 and Glu-144. Residues Asp-151 to Glu-153, Lys-191 to Gln-196, and Lys-227 each bind CTP. UTP contacts are provided by residues Lys-191–Gln-196 and Lys-227. In terms of domain architecture, Glutamine amidotransferase type-1 spans Thr-295 to Ala-547. Gly-356 lines the L-glutamine pocket. The Nucleophile; for glutamine hydrolysis role is filled by Cys-383. Residues Leu-384 to Gln-387, Glu-407, and Arg-473 contribute to the L-glutamine site. Active-site residues include His-520 and Glu-522.

It belongs to the CTP synthase family. Homotetramer.

The enzyme catalyses UTP + L-glutamine + ATP + H2O = CTP + L-glutamate + ADP + phosphate + 2 H(+). The catalysed reaction is L-glutamine + H2O = L-glutamate + NH4(+). It carries out the reaction UTP + NH4(+) + ATP = CTP + ADP + phosphate + 2 H(+). Its pathway is pyrimidine metabolism; CTP biosynthesis via de novo pathway; CTP from UDP: step 2/2. With respect to regulation, allosterically activated by GTP, when glutamine is the substrate; GTP has no effect on the reaction when ammonia is the substrate. The allosteric effector GTP functions by stabilizing the protein conformation that binds the tetrahedral intermediate(s) formed during glutamine hydrolysis. Inhibited by the product CTP, via allosteric rather than competitive inhibition. Functionally, catalyzes the ATP-dependent amination of UTP to CTP with either L-glutamine or ammonia as the source of nitrogen. Regulates intracellular CTP levels through interactions with the four ribonucleotide triphosphates. This is CTP synthase from Paraburkholderia phytofirmans (strain DSM 17436 / LMG 22146 / PsJN) (Burkholderia phytofirmans).